The following is a 656-amino-acid chain: PAN2-PAN3 deadenylation complex subunit pan3 (656 aa).

Disordered regions lie at residues 1–24 and 75–117; these read MAAT…KNRD and SFTP…QQAN. The C3H1-type zinc finger occupies 24–53; that stretch reads DTKETLCRNVVIYGHCRWEDSGCTFNHDQN. The short motif at 63–83 is the PABPC-interacting motif-2 (PAM-2) element; sequence NSNRRVFNVESPSFTPANQQQ. Composition is skewed to polar residues over residues 75–96 and 107–117; these read SFTP…SQAA and GTSTPTLQQAN. Positions 251 to 514 are pseudokinase domain; sequence QLLPNSGLPN…TVETLLGGIT (264 aa). ATP is bound by residues 275–280, R302, 352–359, and 412–413; these read TRNSTC, DFHPLSET, and SK. Positions 515 to 553 form a coiled coil; sequence THLANFANFVMQESDEKEFHLMRELENGRIARLMFKLSV. A knob domain region spans residues 554–656; it reads VNERGDSCGV…SKPSATGATI (103 aa).

This sequence belongs to the protein kinase superfamily. PAN3 family. Homodimer. Forms a heterotrimer with a catalytic subunit par-1/pan2 to form the poly(A)-nuclease (PAN) deadenylation complex. Interacts (via PAM-2 motif) with poly(A)-binding protein pabp-1 (via PABC domain), conferring substrate specificity of the enzyme complex.

It is found in the cytoplasm. In terms of biological role, regulatory subunit of the poly(A)-nuclease (PAN) deadenylation complex, one of two cytoplasmic mRNA deadenylases involved in mRNA turnover. PAN specifically shortens poly(A) tails of RNA and the activity is stimulated by poly(A)-binding protein pabp-1. PAN deadenylation is followed by rapid degradation of the shortened mRNA tails by the CCR4-NOT complex. Deadenylated mRNAs are then degraded by two alternative mechanisms, namely exosome-mediated 3'-5' exonucleolytic degradation, or deadenylation-dependent mRNA decaping and subsequent 5'-3' exonucleolytic degradation by rgb-30/xrn1. May also be involved in post-transcriptional maturation of mRNA poly(A) tails. par-2/pan3 acts as a positive regulator for PAN activity, recruiting the catalytic subunit par-1/pan2 to mRNA via its interaction with RNA and with pabp-1. The sequence is that of PAN2-PAN3 deadenylation complex subunit pan3 (par-2) from Neurospora crassa (strain ATCC 24698 / 74-OR23-1A / CBS 708.71 / DSM 1257 / FGSC 987).